We begin with the raw amino-acid sequence, 340 residues long: tRNA-specific 2-thiouridylase MnmA (340 aa).

ATP contacts are provided by residues Ala6 to Ser13 and Met32. Cys92 serves as the catalytic Nucleophile. A disulfide bridge links Cys92 with Cys186. Gly116 serves as a coordination point for ATP. The interaction with tRNA stretch occupies residues Lys134 to Gln136. The active-site Cysteine persulfide intermediate is the Cys186. The interaction with tRNA stretch occupies residues Arg288–Tyr289.

It belongs to the MnmA/TRMU family.

It localises to the cytoplasm. It catalyses the reaction S-sulfanyl-L-cysteinyl-[protein] + uridine(34) in tRNA + AH2 + ATP = 2-thiouridine(34) in tRNA + L-cysteinyl-[protein] + A + AMP + diphosphate + H(+). Its function is as follows. Catalyzes the 2-thiolation of uridine at the wobble position (U34) of tRNA, leading to the formation of s(2)U34. In Campylobacter concisus (strain 13826), this protein is tRNA-specific 2-thiouridylase MnmA.